A 494-amino-acid polypeptide reads, in one-letter code: Rhamnulokinase (494 aa).

ATP is bound at residue 18 to 22; the sequence is ASSGR. Residues glycine 87 and 242 to 244 contribute to the substrate site; that span reads HDT. Aspartate 243 functions as the Proton acceptor in the catalytic mechanism. Threonine 265 contacts ATP. Asparagine 302 contacts substrate. Glutamine 310 lines the ATP pocket. Cysteine 360 and cysteine 377 are oxidised to a cystine. Glycine 411 contributes to the ATP binding site.

This sequence belongs to the rhamnulokinase family. It depends on Mg(2+) as a cofactor.

The catalysed reaction is L-rhamnulose + ATP = L-rhamnulose 1-phosphate + ADP + H(+). The protein operates within carbohydrate degradation; L-rhamnose degradation; glycerone phosphate from L-rhamnose: step 2/3. In terms of biological role, involved in the catabolism of L-rhamnose (6-deoxy-L-mannose). Catalyzes the transfer of the gamma-phosphate group from ATP to the 1-hydroxyl group of L-rhamnulose to yield L-rhamnulose 1-phosphate. The protein is Rhamnulokinase of Enterococcus faecalis (strain ATCC 700802 / V583).